The primary structure comprises 438 residues: UDP-N-acetylmuramoylalanine--D-glutamate ligase (438 aa).

ATP is bound at residue 112–118 (GSNGKST).

It belongs to the MurCDEF family.

The protein localises to the cytoplasm. It catalyses the reaction UDP-N-acetyl-alpha-D-muramoyl-L-alanine + D-glutamate + ATP = UDP-N-acetyl-alpha-D-muramoyl-L-alanyl-D-glutamate + ADP + phosphate + H(+). Its pathway is cell wall biogenesis; peptidoglycan biosynthesis. Its function is as follows. Cell wall formation. Catalyzes the addition of glutamate to the nucleotide precursor UDP-N-acetylmuramoyl-L-alanine (UMA). The sequence is that of UDP-N-acetylmuramoylalanine--D-glutamate ligase from Salmonella paratyphi A (strain ATCC 9150 / SARB42).